The sequence spans 740 residues: Probable RNA-dependent RNA polymerase 1 (740 aa).

It belongs to the RdRP family.

The enzyme catalyses RNA(n) + a ribonucleoside 5'-triphosphate = RNA(n+1) + diphosphate. Functionally, probably involved in the RNA silencing pathway and required for the generation of small interfering RNAs (siRNAs). This is Probable RNA-dependent RNA polymerase 1 (RDR1) from Oryza sativa subsp. japonica (Rice).